Reading from the N-terminus, the 354-residue chain is N-acetyl-gamma-glutamyl-phosphate reductase (354 aa).

Residue C156 is part of the active site.

It belongs to the NAGSA dehydrogenase family. Type 1 subfamily.

Its subcellular location is the cytoplasm. It carries out the reaction N-acetyl-L-glutamate 5-semialdehyde + phosphate + NADP(+) = N-acetyl-L-glutamyl 5-phosphate + NADPH + H(+). It participates in amino-acid biosynthesis; L-arginine biosynthesis; N(2)-acetyl-L-ornithine from L-glutamate: step 3/4. Catalyzes the NADPH-dependent reduction of N-acetyl-5-glutamyl phosphate to yield N-acetyl-L-glutamate 5-semialdehyde. The polypeptide is N-acetyl-gamma-glutamyl-phosphate reductase (Bordetella bronchiseptica (strain ATCC BAA-588 / NCTC 13252 / RB50) (Alcaligenes bronchisepticus)).